A 380-amino-acid polypeptide reads, in one-letter code: Chaperone protein DnaJ (380 aa).

In terms of domain architecture, J spans 5-70 (DFYEVLGVSR…QKRAAYDQYG (66 aa)). Residues 135–213 (GCEKDIEIPT…CHGDGRVQKT (79 aa)) form a CR-type zinc finger. Cysteine 148, cysteine 151, cysteine 165, cysteine 168, cysteine 187, cysteine 190, cysteine 201, and cysteine 204 together coordinate Zn(2+). CXXCXGXG motif repeat units lie at residues 148-155 (CEPCDGTG), 165-172 (CSTCHGQG), 187-194 (CPTCHGKG), and 201-208 (CNSCHGDG).

This sequence belongs to the DnaJ family. As to quaternary structure, homodimer. It depends on Zn(2+) as a cofactor.

It is found in the cytoplasm. Functionally, participates actively in the response to hyperosmotic and heat shock by preventing the aggregation of stress-denatured proteins and by disaggregating proteins, also in an autonomous, DnaK-independent fashion. Unfolded proteins bind initially to DnaJ; upon interaction with the DnaJ-bound protein, DnaK hydrolyzes its bound ATP, resulting in the formation of a stable complex. GrpE releases ADP from DnaK; ATP binding to DnaK triggers the release of the substrate protein, thus completing the reaction cycle. Several rounds of ATP-dependent interactions between DnaJ, DnaK and GrpE are required for fully efficient folding. Also involved, together with DnaK and GrpE, in the DNA replication of plasmids through activation of initiation proteins. In Aliivibrio salmonicida (strain LFI1238) (Vibrio salmonicida (strain LFI1238)), this protein is Chaperone protein DnaJ.